Consider the following 374-residue polypeptide: Histidinol-phosphate aminotransferase (374 aa).

Lys-211 carries the N6-(pyridoxal phosphate)lysine modification. Residues 351-368 (GNSSQDSASKSNSSANND) show a composition bias toward low complexity. Residues 351–374 (GNSSQDSASKSNSSANNDELNASN) form a disordered region.

It belongs to the class-II pyridoxal-phosphate-dependent aminotransferase family. Histidinol-phosphate aminotransferase subfamily. As to quaternary structure, homodimer. The cofactor is pyridoxal 5'-phosphate.

It catalyses the reaction L-histidinol phosphate + 2-oxoglutarate = 3-(imidazol-4-yl)-2-oxopropyl phosphate + L-glutamate. Its pathway is amino-acid biosynthesis; L-histidine biosynthesis; L-histidine from 5-phospho-alpha-D-ribose 1-diphosphate: step 7/9. This chain is Histidinol-phosphate aminotransferase, found in Photobacterium profundum (strain SS9).